A 420-amino-acid chain; its full sequence is Gamma-glutamyl phosphate reductase (420 aa).

Belongs to the gamma-glutamyl phosphate reductase family.

The protein resides in the cytoplasm. The enzyme catalyses L-glutamate 5-semialdehyde + phosphate + NADP(+) = L-glutamyl 5-phosphate + NADPH + H(+). It participates in amino-acid biosynthesis; L-proline biosynthesis; L-glutamate 5-semialdehyde from L-glutamate: step 2/2. Catalyzes the NADPH-dependent reduction of L-glutamate 5-phosphate into L-glutamate 5-semialdehyde and phosphate. The product spontaneously undergoes cyclization to form 1-pyrroline-5-carboxylate. In Chlorobaculum parvum (strain DSM 263 / NCIMB 8327) (Chlorobium vibrioforme subsp. thiosulfatophilum), this protein is Gamma-glutamyl phosphate reductase.